Here is a 629-residue protein sequence, read N- to C-terminus: Ras GTPase-activating protein gap-1 (629 aa).

A Ras-GAP domain is found at 183–398; sequence DRIRPVLSSL…SVMASFLDNI (216 aa). One can recognise a PH domain in the interval 411–507; that stretch reads TVFKFGNLQQ…WLNAIERQRN (97 aa).

It localises to the cytoplasm. GTPase-activating protein, which inhibits the vulval induction by acting as a negative regulator for the member of the Ras family let-60. Probably decreases the signaling activity of Ras by stimulating its intrinsic GTPase activity, thereby lowering the levels of GTP-bound, active Ras. In Caenorhabditis elegans, this protein is Ras GTPase-activating protein gap-1 (gap-1).